We begin with the raw amino-acid sequence, 68 residues long: Large ribosomal subunit protein bL35 (68 aa).

It belongs to the bacterial ribosomal protein bL35 family.

This chain is Large ribosomal subunit protein bL35, found in Rickettsia conorii (strain ATCC VR-613 / Malish 7).